Here is a 509-residue protein sequence, read N- to C-terminus: Maturase K (509 aa).

This sequence belongs to the intron maturase 2 family. MatK subfamily.

It localises to the plastid. It is found in the chloroplast. Functionally, usually encoded in the trnK tRNA gene intron. Probably assists in splicing its own and other chloroplast group II introns. This is Maturase K from Clematis vitalba (Evergreen clematis).